A 276-amino-acid polypeptide reads, in one-letter code: Bifunctional protein FolD (276 aa).

Residues 157–159 (NRS), Ser182, and Ile223 each bind NADP(+).

The protein belongs to the tetrahydrofolate dehydrogenase/cyclohydrolase family. In terms of assembly, homodimer.

It catalyses the reaction (6R)-5,10-methylene-5,6,7,8-tetrahydrofolate + NADP(+) = (6R)-5,10-methenyltetrahydrofolate + NADPH. The enzyme catalyses (6R)-5,10-methenyltetrahydrofolate + H2O = (6R)-10-formyltetrahydrofolate + H(+). Its pathway is one-carbon metabolism; tetrahydrofolate interconversion. Catalyzes the oxidation of 5,10-methylenetetrahydrofolate to 5,10-methenyltetrahydrofolate and then the hydrolysis of 5,10-methenyltetrahydrofolate to 10-formyltetrahydrofolate. This is Bifunctional protein FolD from Thermoplasma acidophilum (strain ATCC 25905 / DSM 1728 / JCM 9062 / NBRC 15155 / AMRC-C165).